Consider the following 251-residue polypeptide: tRNA pseudouridine synthase A (251 aa).

The active-site Nucleophile is Asp52. Substrate is bound at residue Tyr113.

The protein belongs to the tRNA pseudouridine synthase TruA family. As to quaternary structure, homodimer.

It carries out the reaction uridine(38/39/40) in tRNA = pseudouridine(38/39/40) in tRNA. In terms of biological role, formation of pseudouridine at positions 38, 39 and 40 in the anticodon stem and loop of transfer RNAs. This is tRNA pseudouridine synthase A from Brucella anthropi (strain ATCC 49188 / DSM 6882 / CCUG 24695 / JCM 21032 / LMG 3331 / NBRC 15819 / NCTC 12168 / Alc 37) (Ochrobactrum anthropi).